The following is a 265-amino-acid chain: MLASCGAKGRFDQVDDGKIKLASSLTGKRDVILQEVLNKYNSRKAKDDYPIEITKIAGSYDGGRSDLQTRLSVKDKTTFYNMILNYSDTISTLGRSNMELPLDSVDVSQFSENFLSFNDRISGISRKGIYGIPVSMSTDILVINGPVLHYILNSAKKKDGAVTKKNASNSNGNEGTLTVNNDQQTTELWKKIEEAAKTNGKTTQEQTKRDAKQSTSLIQLKEGSANTTEGNASESDKEIKKSWGNYQEVDGGLKGYTFKASVFEN.

Disordered regions lie at residues 162–183 and 196–239; these read VTKKNASNSNGNEGTLTVNNDQ and AKTN…DKEI. Composition is skewed to polar residues over residues 165–183 and 213–233; these read KNASNSNGNEGTLTVNNDQ and QSTSLIQLKEGSANTTEGNAS.

This sequence belongs to the MG185/MG260 family.

This is an uncharacterized protein from Mycoplasma pneumoniae (strain ATCC 29342 / M129 / Subtype 1) (Mycoplasmoides pneumoniae).